Consider the following 144-residue polypeptide: D-aminoacyl-tRNA deacylase (144 aa).

The Gly-cisPro motif, important for rejection of L-amino acids signature appears at 137-138 (GP).

This sequence belongs to the DTD family. As to quaternary structure, homodimer.

Its subcellular location is the cytoplasm. The enzyme catalyses glycyl-tRNA(Ala) + H2O = tRNA(Ala) + glycine + H(+). It carries out the reaction a D-aminoacyl-tRNA + H2O = a tRNA + a D-alpha-amino acid + H(+). Functionally, an aminoacyl-tRNA editing enzyme that deacylates mischarged D-aminoacyl-tRNAs. Also deacylates mischarged glycyl-tRNA(Ala), protecting cells against glycine mischarging by AlaRS. Acts via tRNA-based rather than protein-based catalysis; rejects L-amino acids rather than detecting D-amino acids in the active site. By recycling D-aminoacyl-tRNA to D-amino acids and free tRNA molecules, this enzyme counteracts the toxicity associated with the formation of D-aminoacyl-tRNA entities in vivo and helps enforce protein L-homochirality. In Marinomonas sp. (strain MWYL1), this protein is D-aminoacyl-tRNA deacylase.